We begin with the raw amino-acid sequence, 241 residues long: tRNA pseudouridine synthase A (241 aa).

Asp-52 serves as the catalytic Nucleophile. Tyr-111 serves as a coordination point for substrate.

The protein belongs to the tRNA pseudouridine synthase TruA family. In terms of assembly, homodimer.

It carries out the reaction uridine(38/39/40) in tRNA = pseudouridine(38/39/40) in tRNA. Functionally, formation of pseudouridine at positions 38, 39 and 40 in the anticodon stem and loop of transfer RNAs. This Ureaplasma parvum serovar 3 (strain ATCC 27815 / 27 / NCTC 11736) protein is tRNA pseudouridine synthase A.